A 213-amino-acid chain; its full sequence is Probable nicotinate-nucleotide adenylyltransferase (213 aa).

The interval 194 to 213 (RKPNNGEAKDGDVKDEEAVR) is disordered. A compositionally biased stretch (basic and acidic residues) spans 200 to 213 (EAKDGDVKDEEAVR).

It belongs to the NadD family.

The catalysed reaction is nicotinate beta-D-ribonucleotide + ATP + H(+) = deamido-NAD(+) + diphosphate. It participates in cofactor biosynthesis; NAD(+) biosynthesis; deamido-NAD(+) from nicotinate D-ribonucleotide: step 1/1. Catalyzes the reversible adenylation of nicotinate mononucleotide (NaMN) to nicotinic acid adenine dinucleotide (NaAD). The protein is Probable nicotinate-nucleotide adenylyltransferase of Mycolicibacterium smegmatis (strain ATCC 700084 / mc(2)155) (Mycobacterium smegmatis).